The primary structure comprises 249 residues: Cytoplasmic envelopment protein 1 (249 aa).

The protein belongs to the herpesviridae cytoplasmic envelopment protein 1 family.

It localises to the virion. It is found in the virion tegument. The protein resides in the host cytoplasm. Its subcellular location is the host Golgi apparatus. Plays a critical role in cytoplasmic virus egress. Participates in the final step of tegumentation and envelope acquisition within the host cytoplasm. The chain is Cytoplasmic envelopment protein 1 (U75) from Human herpesvirus 6A (strain Uganda-1102) (HHV-6 variant A).